Consider the following 251-residue polypeptide: GTP cyclohydrolase 1 type 2 homolog (251 aa).

His-62, His-63, Asp-103, His-215, and Glu-219 together coordinate a divalent metal cation.

It belongs to the GTP cyclohydrolase I type 2/NIF3 family. Homohexamer.

The protein is GTP cyclohydrolase 1 type 2 homolog of Mycoplasmopsis pulmonis (strain UAB CTIP) (Mycoplasma pulmonis).